Reading from the N-terminus, the 203-residue chain is Nascent polypeptide-associated complex subunit alpha-like protein 1 (203 aa).

The segment covering 1-23 (MTTEEKEILAAKLEEQKIDLDKP) has biased composition (basic and acidic residues). A disordered region spans residues 1–71 (MTTEEKEILA…SEKKSRKAML (71 aa)). Positions 24–50 (EVEDDDDNEDDDSDDDDKDDDEADGLD) are enriched in acidic residues. The residue at position 36 (serine 36) is a Phosphoserine. Residues 60–125 (SRSEKKSRKA…AKIEDLSSQI (66 aa)) form the NAC-A/B domain. Positions 158–203 (EVDEEGVEPKDIELVMTQAGVSRPNAVKALKAADGDIVSAIMELTT) constitute a UBA domain.

This sequence belongs to the NAC-alpha family.

Functionally, may promote appropriate targeting of ribosome-nascent polypeptide complexes. The protein is Nascent polypeptide-associated complex subunit alpha-like protein 1 of Arabidopsis thaliana (Mouse-ear cress).